A 392-amino-acid polypeptide reads, in one-letter code: Tryptophan synthase beta chain (392 aa).

At Lys84 the chain carries N6-(pyridoxal phosphate)lysine.

This sequence belongs to the TrpB family. As to quaternary structure, tetramer of two alpha and two beta chains. It depends on pyridoxal 5'-phosphate as a cofactor.

The catalysed reaction is (1S,2R)-1-C-(indol-3-yl)glycerol 3-phosphate + L-serine = D-glyceraldehyde 3-phosphate + L-tryptophan + H2O. Its pathway is amino-acid biosynthesis; L-tryptophan biosynthesis; L-tryptophan from chorismate: step 5/5. Functionally, the beta subunit is responsible for the synthesis of L-tryptophan from indole and L-serine. This Campylobacter jejuni subsp. jejuni serotype O:6 (strain 81116 / NCTC 11828) protein is Tryptophan synthase beta chain.